Here is a 151-residue protein sequence, read N- to C-terminus: Receptor activity-modifying protein 3 (151 aa).

A signal peptide spans 1–30; it reads MEATAPRRRHLLPLLLLLLLLCGECPPVSG. At 31–116 the chain is on the extracellular side; that stretch reads CNEKRMLAML…CSVDRQQWQD (86 aa). Disulfide bonds link C43/C75 and C60/C107. N-linked (GlcNAc...) asparagine glycans are attached at residues N61 and N106. Residues 117–141 traverse the membrane as a helical segment; that stretch reads PPDEILIPLIVVPILLTLAMTGLVV. Topologically, residues 142–151 are cytoplasmic; the sequence is WRSKRAAQVV.

This sequence belongs to the RAMP family. As to quaternary structure, heterodimer of CALCRL and RAMP3; interaction induces allosteric modulation of CALCRL function and ligand specificity for adrenomedullin/ADM and intermedin/ADM2. Heterodimer of CALCR and RAMP3; interaction form the receptor complex AMYR3 for amylin/IAPP. Interacts with GPER1.

It localises to the cell membrane. The protein resides in the membrane. Accessory protein that interacts with and modulates the function of G-protein coupled receptors including calcitonin gene-related peptide type 1 receptor (CALCRL), calcitonin receptor (CALCR) and G-protein coupled estrogen receptor 1 (GPER1). Required for the transport of CALCRL and GPER1 receptors to the plasma membrane. Plays a role in cardioprotection by reducing cardiac hypertrophy and perivascular fibrosis in a GPER1-dependent manner. Together with CALCRL, form a receptor complex for adrenomedullin/ADM and intermedin/ADM2. Together with CALCR, act as a receptor complex for amylin/IAPP. This Sus scrofa (Pig) protein is Receptor activity-modifying protein 3 (RAMP3).